The following is a 488-amino-acid chain: Zinc finger protein 345 (488 aa).

C2H2-type zinc fingers lie at residues 62–84 (LECK…QRIH), 90–112 (YECK…QRIH), 118–140 (FECK…QRIH), 146–168 (YECK…QIIH), 174–196 (YECK…HRIH), 202–224 (YECI…RRIH), 230–252 (YECK…QRIH), 258–280 (YICN…QRIH), 286–308 (YVCK…QRIH), 314–336 (YECK…QRMH), 342–364 (YECK…HRIH), 370–392 (YECK…QLIH), 398–420 (YECK…QRIH), 426–448 (YECK…QRIH), and 454–476 (YECK…KKSH).

The protein belongs to the krueppel C2H2-type zinc-finger protein family.

It localises to the nucleus. Functionally, may be involved in transcriptional regulation. The sequence is that of Zinc finger protein 345 (ZNF345) from Homo sapiens (Human).